We begin with the raw amino-acid sequence, 115 residues long: NADH-ubiquinone oxidoreductase chain 3 (115 aa).

A run of 3 helical transmembrane segments spans residues 3-23, 55-75, and 87-107; these read LVIALLINTGLATILVMVAFW, FFLVAITFLLFDLEIAILLPI, and LLSLSGVLLALLTLGLAYEWL.

This sequence belongs to the complex I subunit 3 family. In terms of assembly, core subunit of respiratory chain NADH dehydrogenase (Complex I) which is composed of 45 different subunits. Interacts with TMEM186. Interacts with TMEM242.

The protein resides in the mitochondrion inner membrane. The enzyme catalyses a ubiquinone + NADH + 5 H(+)(in) = a ubiquinol + NAD(+) + 4 H(+)(out). Its function is as follows. Core subunit of the mitochondrial membrane respiratory chain NADH dehydrogenase (Complex I) which catalyzes electron transfer from NADH through the respiratory chain, using ubiquinone as an electron acceptor. Essential for the catalytic activity of complex I. The sequence is that of NADH-ubiquinone oxidoreductase chain 3 from Ornithorhynchus anatinus (Duckbill platypus).